The following is a 628-amino-acid chain: FAD-linked oxidoreductase easE (628 aa).

The first 20 residues, 1 to 20 (MSHRILCVAFCVCSLVAVSS), serve as a signal peptide directing secretion. The 185-residue stretch at 144–328 (HQGRIPLYSA…TRATMRVHLN (185 aa)) folds into the FAD-binding PCMH-type domain. Position 182 is a pros-8alpha-FAD histidine (His182). Asn343, Asn382, and Asn487 each carry an N-linked (GlcNAc...) asparagine glycan.

The protein belongs to the oxygen-dependent FAD-linked oxidoreductase family. It depends on FAD as a cofactor.

The protein operates within alkaloid biosynthesis; ergot alkaloid biosynthesis. In terms of biological role, FAD binding oxidoreductase; part of the gene cluster that mediates the biosynthesis of fumiclavanine C, a fungal ergot alkaloid. DmaW catalyzes the first step of ergot alkaloid biosynthesis by condensing dimethylallyl diphosphate (DMAP) and tryptophan to form 4-dimethylallyl-L-tryptophan. The second step is catalyzed by the methyltransferase easF that methylates 4-dimethylallyl-L-tryptophan in the presence of S-adenosyl-L-methionine, resulting in the formation of 4-dimethylallyl-L-abrine. The catalase easC and the FAD-dependent oxidoreductase easE then transform 4-dimethylallyl-L-abrine to chanoclavine-I which is further oxidized by EasD in the presence of NAD(+), resulting in the formation of chanoclavine-I aldehyde. EasA reduces chanoclavine-I aldehyde to dihydrochanoclavine-I aldehyde that spontaneously dehydrates to form 6,8-dimethyl-6,7-didehydroergoline. EasG then catalyzes the reduction of 6,8-dimethyl-6,7-didehydroergoline to form festuclavine. Hydrolysis of festuclavine by easM then leads to the formation of fumigaclavine B which is in turn acetylated by easN to fumigaclavine A. Finally, easL catalyzes the conversion of fumigaclavine A into fumigaclavine C by attaching a dimethylallyl moiety to C-2 of the indole nucleus. The sequence is that of FAD-linked oxidoreductase easE from Aspergillus fumigatus (strain ATCC MYA-4609 / CBS 101355 / FGSC A1100 / Af293) (Neosartorya fumigata).